The primary structure comprises 1187 residues: Tyrosine-protein phosphatase non-receptor type 14 (1187 aa).

One can recognise an FERM domain in the interval F21–K306. Phosphoserine is present on residues S314, S461, and S486. Polar residues predominate over residues L510–V524. Residues L510–S531 form a disordered region. Phosphoserine is present on residues S591, S593, S594, and S642. Disordered stretches follow at residues L671 to P690 and K787 to P824. Positions S815 to P824 are enriched in basic and acidic residues. Position 831 is a phosphoserine (S831). The Tyrosine-protein phosphatase domain occupies V909 to F1180. Residues D1079, C1121–R1127, and Q1165 contribute to the substrate site. C1121 (phosphocysteine intermediate) is an active-site residue.

This sequence belongs to the protein-tyrosine phosphatase family. Non-receptor class subfamily. In terms of assembly, interacts with FLT4; the interaction is enhanced by stimulation with VEGFC. Interacts (via PPxY motifs) with YAP1 (via WW domains); this interaction leads to the cytoplasmic sequestration of YAP1 and inhibits its transcriptional co-activator activity. In terms of processing, ubiquitinated by the ECS (Elongin BC-CUL2/5-SOCS-box protein)/LRR1 E3 ligase complex and subsequently targeted to proteasomal degradation. As to expression, ubiquitous.

The protein resides in the cytoplasm. It localises to the cytoskeleton. The protein localises to the nucleus. The catalysed reaction is O-phospho-L-tyrosyl-[protein] + H2O = L-tyrosyl-[protein] + phosphate. Functionally, protein tyrosine phosphatase which may play a role in the regulation of lymphangiogenesis, cell-cell adhesion, cell-matrix adhesion, cell migration, cell growth and also regulates TGF-beta gene expression, thereby modulating epithelial-mesenchymal transition. Mediates beta-catenin dephosphorylation at adhesion junctions. Acts as a negative regulator of the oncogenic property of YAP, a downstream target of the hippo pathway, in a cell density-dependent manner. May function as a tumor suppressor. The protein is Tyrosine-protein phosphatase non-receptor type 14 (PTPN14) of Homo sapiens (Human).